Consider the following 146-residue polypeptide: Large ribosomal subunit protein uL15 (146 aa).

The segment covering 1 to 18 (MKLHELKPSEGSRKERNR) has biased composition (basic and acidic residues). Positions 1-50 (MKLHELKPSEGSRKERNRVGRGTGSGNGKTSGRGHKGQKARSGGGVRLGF) are disordered. A compositionally biased stretch (gly residues) spans 21–31 (RGTGSGNGKTS).

Belongs to the universal ribosomal protein uL15 family. In terms of assembly, part of the 50S ribosomal subunit.

In terms of biological role, binds to the 23S rRNA. The chain is Large ribosomal subunit protein uL15 from Listeria monocytogenes serotype 4b (strain CLIP80459).